The sequence spans 118 residues: Small ribosomal subunit protein uS13 (118 aa).

The interval 91–118 (HRRGLPVRGQRTKTNARTRKGPRKPIKK) is disordered.

Belongs to the universal ribosomal protein uS13 family. In terms of assembly, part of the 30S ribosomal subunit. Forms a loose heterodimer with protein S19. Forms two bridges to the 50S subunit in the 70S ribosome.

Located at the top of the head of the 30S subunit, it contacts several helices of the 16S rRNA. In the 70S ribosome it contacts the 23S rRNA (bridge B1a) and protein L5 of the 50S subunit (bridge B1b), connecting the 2 subunits; these bridges are implicated in subunit movement. Contacts the tRNAs in the A and P-sites. This chain is Small ribosomal subunit protein uS13, found in Sodalis glossinidius (strain morsitans).